The primary structure comprises 118 residues: Large ribosomal subunit protein bL19 (118 aa).

This sequence belongs to the bacterial ribosomal protein bL19 family.

In terms of biological role, this protein is located at the 30S-50S ribosomal subunit interface and may play a role in the structure and function of the aminoacyl-tRNA binding site. The polypeptide is Large ribosomal subunit protein bL19 (Salinispora arenicola (strain CNS-205)).